Here is a 285-residue protein sequence, read N- to C-terminus: Single myb histone 3 (285 aa).

The disordered stretch occupies residues 1–35; sequence MGAPKQKWTSEEEDALRRGVRKHGAGKWRTIQKDP. The HTH myb-type domain occupies 1–60; sequence MGAPKQKWTSEEEDALRRGVRKHGAGKWRTIQKDPQFSPILSSRSNIDLKDKWRNLSFSA. The H-T-H motif DNA-binding region spans 28–56; that stretch reads WRTIQKDPQFSPILSSRSNIDLKDKWRNL. Residues 113-181 enclose the H15 domain; sequence TPPKYGAMIM…KVDNFYRLPD (69 aa). Residues 226 to 255 adopt a coiled-coil conformation; sequence VKVTDAEAKAHDAHDQMMEAERMLKMAEDT.

Belongs to the histone H1/H5 family. SMH subfamily. Forms a homodimer and heterodimers.

The protein localises to the nucleus. It localises to the chromosome. It is found in the nucleolus. Its subcellular location is the telomere. Binds preferentially double-stranded telomeric repeats, but may also bind to the single telomeric strand. This is Single myb histone 3 (SMH3) from Zea mays (Maize).